The chain runs to 225 residues: Transcription factor MYB1 (225 aa).

HTH myb-type domains follow at residues 11–67 and 68–118; these read LGRV…KPSI and KRGH…YKKH. 2 consecutive DNA-binding regions (H-T-H motif) follow at residues 39 to 63 and 91 to 114; these read WKRV…LNYL and WSLI…NTHL.

No interactions with bHLH.

It is found in the nucleus. In terms of biological role, activates DODA1 and CYP76AD1 in the betalain red pigment pathway. This is Transcription factor MYB1 from Beta vulgaris (Sugar beet).